The chain runs to 169 residues: Ribosome maturation factor RimM (169 aa).

Positions 97-169 (PGEYYWYQLI…VITVDWDMNF (73 aa)) constitute a PRC barrel domain.

It belongs to the RimM family. Binds ribosomal protein uS19.

Its subcellular location is the cytoplasm. Its function is as follows. An accessory protein needed during the final step in the assembly of 30S ribosomal subunit, possibly for assembly of the head region. Essential for efficient processing of 16S rRNA. May be needed both before and after RbfA during the maturation of 16S rRNA. It has affinity for free ribosomal 30S subunits but not for 70S ribosomes. This chain is Ribosome maturation factor RimM, found in Legionella pneumophila (strain Paris).